We begin with the raw amino-acid sequence, 429 residues long: Transcriptional adapter 3 (429 aa).

Residues 41-70 adopt a coiled-coil conformation; the sequence is IEELDTLQLELETLLSSASRRLRALEEQRQ. Disordered stretches follow at residues 86 to 132, 208 to 257, and 274 to 308; these read KLEK…TKVQ, EERR…PFGP, and PMED…HTRS. Composition is skewed to basic and acidic residues over residues 208 to 221 and 230 to 249; these read EERR…DKKK and LDAK…HEPP. Residues 364 to 404 adopt a coiled-coil conformation; sequence LLKLAREEMRKQELRQRVRVADNEVMEAFRRIMAARQKKRT.

This sequence belongs to the NGG1 family.

It localises to the nucleus. Its function is as follows. Functions as a component of the PCAF complex. The PCAF complex is capable of efficiently acetylating histones in a nucleosomal context. The polypeptide is Transcriptional adapter 3 (tada3) (Danio rerio (Zebrafish)).